Here is a 401-residue protein sequence, read N- to C-terminus: MSKEKIAVAYSGGLDTSVMIKWLKDKYEGAEIVAVTGNLGQKMEVDNLEQKAIATGAKSFHFVDLRKTFVEEYIWKALKAGALYEDVYPLATALGRPLLAKALVDVALAEGCTMLTHGCTGKGNDQVRFEVAFAALAPHMKVVAPLREWEFTSREQEIAYAMEHNIPVSATKKNPYSIDENIWGISIECGVLEDPMVAPPADAYQITTAPELAPDEPTVVDIEFAQGVPVALDGQQMEGLDLIVRLNELGAMNGVGRLDMIENRVVGIKSREIYEAPAATILHFAHRELERLTLEKSVFQYKRNIGQDYANLIYNGTWFSPMRKALDAFVDETQKPVTGMVRIKLYKGSMTLLGRTSPNSLYNEALATYTEADTFDHKSAEGFIKIYGLGLKTFHEVNKSE.

Position 9–17 (9–17 (AYSGGLDTS)) interacts with ATP. An L-citrulline-binding site is contributed by Y88. An ATP-binding site is contributed by G118. Residues T120, N124, and D125 each contribute to the L-aspartate site. N124 contributes to the L-citrulline binding site. Residues R128, S177, S186, E262, and Y274 each coordinate L-citrulline.

Belongs to the argininosuccinate synthase family. Type 1 subfamily. Homotetramer.

The protein resides in the cytoplasm. It carries out the reaction L-citrulline + L-aspartate + ATP = 2-(N(omega)-L-arginino)succinate + AMP + diphosphate + H(+). It functions in the pathway amino-acid biosynthesis; L-arginine biosynthesis; L-arginine from L-ornithine and carbamoyl phosphate: step 2/3. The polypeptide is Argininosuccinate synthase (Chlorobaculum tepidum (strain ATCC 49652 / DSM 12025 / NBRC 103806 / TLS) (Chlorobium tepidum)).